Consider the following 265-residue polypeptide: tRNA pseudouridine synthase A (265 aa).

The active-site Nucleophile is the Asp-53. Tyr-111 provides a ligand contact to substrate.

It belongs to the tRNA pseudouridine synthase TruA family. As to quaternary structure, homodimer.

The catalysed reaction is uridine(38/39/40) in tRNA = pseudouridine(38/39/40) in tRNA. Its function is as follows. Formation of pseudouridine at positions 38, 39 and 40 in the anticodon stem and loop of transfer RNAs. This chain is tRNA pseudouridine synthase A, found in Acinetobacter baumannii (strain AB307-0294).